The sequence spans 411 residues: Carbohydrate sulfotransferase 1 (411 aa).

A topological domain (cytoplasmic) is located at residue Met1. The helical; Signal-anchor for type II membrane protein transmembrane segment at Gln2–Ile23 threads the bilayer. Over Arg24–Leu411 the chain is Lumenal. The N-linked (GlcNAc...) asparagine glycan is linked to Asn56. Thr69 to Phe75 lines the 3'-phosphoadenylyl sulfate pocket. Asn145 and Asn189 each carry an N-linked (GlcNAc...) asparagine glycan. Arg234 to Ser242 contacts 3'-phosphoadenylyl sulfate. A glycan (N-linked (GlcNAc...) asparagine) is linked at Asn334. Positions Arg337–Asp339 match the Cell attachment site motif.

Belongs to the sulfotransferase 1 family. Gal/GlcNAc/GalNAc subfamily.

The protein localises to the golgi apparatus membrane. It catalyses the reaction 3'-phosphoadenylyl sulfate + keratan = adenosine 3',5'-bisphosphate + keratan 6'-sulfate.. The protein operates within glycan metabolism. Its function is as follows. Sulfotransferase that utilizes 3'-phospho-5'-adenylyl sulfate (PAPS) as sulfonate donor to catalyze the transfer of sulfate to position 6 of internal galactose (Gal) residues of keratan. Cooperates with B4GALT4 and B3GNT7 glycosyltransferases and CHST6 sulfotransferase to construct and elongate disulfated disaccharide unit [-&gt;3(6-sulfoGalbeta)1-&gt;4(6-sulfoGlcNAcbeta)1-&gt;] within keratan sulfate polymer. Has a preference for sulfating keratan sulfate, but it also transfers sulfate to the unsulfated polymer. Involved in biosynthesis of phosphacan, a major keratan sulfate proteoglycan in the developing brain. Involved in biosynthesis of 6-sulfoGalbeta-containing O-linked glycans in high endothelial venules of lymph nodes. May act in a synergistic manner with CHST4 to generate sialyl 6',6-disulfo Lewis X motif, a recognition determinant for immune cell receptors implicated in leukocyte trafficking. Catalyzes sulfation of N-acetyllactosamine (LacNAc) oligosaccharides with highest efficiency for sialylated LacNAc structures. This is Carbohydrate sulfotransferase 1 (Chst1) from Rattus norvegicus (Rat).